Here is an 81-residue protein sequence, read N- to C-terminus: Photosystem I iron-sulfur center (81 aa).

2 4Fe-4S ferredoxin-type domains span residues serine 2–tryptophan 31 and isoleucine 39–tyrosine 68. [4Fe-4S] cluster-binding residues include cysteine 11, cysteine 14, cysteine 17, cysteine 21, cysteine 48, cysteine 51, cysteine 54, and cysteine 58.

In terms of assembly, the cyanobacterial PSI reaction center is composed of one copy each of PsaA,B,C,D,E,F,I,J,K,L,M and X, and forms trimeric complexes. [4Fe-4S] cluster is required as a cofactor.

The protein resides in the cellular thylakoid membrane. It carries out the reaction reduced [plastocyanin] + hnu + oxidized [2Fe-2S]-[ferredoxin] = oxidized [plastocyanin] + reduced [2Fe-2S]-[ferredoxin]. Apoprotein for the two 4Fe-4S centers FA and FB of photosystem I (PSI); essential for photochemical activity. FB is the terminal electron acceptor of PSI, donating electrons to ferredoxin. The C-terminus interacts with PsaA/B/D and helps assemble the protein into the PSI complex. Required for binding of PsaD and PsaE to PSI. PSI is a plastocyanin/cytochrome c6-ferredoxin oxidoreductase, converting photonic excitation into a charge separation, which transfers an electron from the donor P700 chlorophyll pair to the spectroscopically characterized acceptors A0, A1, FX, FA and FB in turn. In Mastigocladus laminosus (Fischerella sp.), this protein is Photosystem I iron-sulfur center.